A 186-amino-acid chain; its full sequence is MAAVDPSVSGVSGRYATALFELAREDKSIDAVKADLDKFDAMLAESPELVRLVRSPVFSADTQSKALAAVLSKAGIGGTTANFLKVLAANRRLFAVADVIRAFRALVAKFKGEATAEVTVAEKLNDKNLDALKAALKSVTGKDITLNVKVDPSIIGGLVVKLGSRMVDTSLRTKLNSIKHAMKEAG.

This sequence belongs to the ATPase delta chain family. In terms of assembly, F-type ATPases have 2 components, F(1) - the catalytic core - and F(0) - the membrane proton channel. F(1) has five subunits: alpha(3), beta(3), gamma(1), delta(1), epsilon(1). F(0) has three main subunits: a(1), b(2) and c(10-14). The alpha and beta chains form an alternating ring which encloses part of the gamma chain. F(1) is attached to F(0) by a central stalk formed by the gamma and epsilon chains, while a peripheral stalk is formed by the delta and b chains.

The protein localises to the cell inner membrane. F(1)F(0) ATP synthase produces ATP from ADP in the presence of a proton or sodium gradient. F-type ATPases consist of two structural domains, F(1) containing the extramembraneous catalytic core and F(0) containing the membrane proton channel, linked together by a central stalk and a peripheral stalk. During catalysis, ATP synthesis in the catalytic domain of F(1) is coupled via a rotary mechanism of the central stalk subunits to proton translocation. Functionally, this protein is part of the stalk that links CF(0) to CF(1). It either transmits conformational changes from CF(0) to CF(1) or is implicated in proton conduction. The protein is ATP synthase subunit delta of Nitrobacter winogradskyi (strain ATCC 25391 / DSM 10237 / CIP 104748 / NCIMB 11846 / Nb-255).